A 340-amino-acid chain; its full sequence is Inactive hyaluronidase B (340 aa).

2 disulfides stabilise this stretch: cysteine 21–cysteine 310 and cysteine 187–cysteine 199. N-linked (GlcNAc...) asparagine glycosylation is found at asparagine 66 and asparagine 81.

This sequence belongs to the glycosyl hydrolase 56 family. In terms of processing, N-glycosylated on at least two Asn residues by identical heptasaccharide units composed of Man, GlcNAc, and Fuc residues in the molar ration of 3:2:2. Expressed by the venom gland.

The protein localises to the secreted. Functionally, has no hyaluronidase activity. In Vespula vulgaris (Yellow jacket), this protein is Inactive hyaluronidase B.